A 390-amino-acid polypeptide reads, in one-letter code: Protein phosphatase 1B (390 aa).

Residues methionine 1–asparagine 14 show a composition bias toward basic and acidic residues. Residues methionine 1 to asparagine 20 form a disordered region. Glycine 2 carries N-myristoyl glycine lipidation. Lysine 12 is covalently cross-linked (Glycyl lysine isopeptide (Lys-Gly) (interchain with G-Cter in ISG15)). Residues arginine 23–phenylalanine 295 enclose the PPM-type phosphatase domain. Mn(2+)-binding residues include aspartate 60, glycine 61, aspartate 243, and aspartate 286. The disordered stretch occupies residues asparagine 371–leucine 390. Serine 386 is subject to Phosphoserine.

The protein belongs to the PP2C family. As to quaternary structure, monomer. Interacts with PAK6. Interacts with the phosphorylated form of IKBKB/IKKB. Mg(2+) serves as cofactor. Requires Mn(2+) as cofactor. Isgylation negatively regulates its activity. Post-translationally, N-myristoylation is essential for the recognition of its substrates for dephosphorylation.

It is found in the cytoplasm. It localises to the cytosol. The protein localises to the membrane. It catalyses the reaction O-phospho-L-seryl-[protein] + H2O = L-seryl-[protein] + phosphate. The enzyme catalyses O-phospho-L-threonyl-[protein] + H2O = L-threonyl-[protein] + phosphate. Its function is as follows. Enzyme with a broad specificity. Dephosphorylates PRKAA1 and PRKAA2. Inhibits TBK1-mediated antiviral signaling by dephosphorylating it at 'Ser-172'. Plays an important role in the termination of TNF-alpha-mediated NF-kappa-B activation through dephosphorylating and inactivating IKBKB/IKKB. This chain is Protein phosphatase 1B (Ppm1b), found in Rattus norvegicus (Rat).